Here is a 203-residue protein sequence, read N- to C-terminus: Small ribosomal subunit protein uS4 (203 aa).

The S4 RNA-binding domain maps to 93 to 155 (RRLDSIVYRL…SKNLQQIRDA (63 aa)).

It belongs to the universal ribosomal protein uS4 family. Part of the 30S ribosomal subunit. Contacts protein S5. The interaction surface between S4 and S5 is involved in control of translational fidelity.

One of the primary rRNA binding proteins, it binds directly to 16S rRNA where it nucleates assembly of the body of the 30S subunit. Its function is as follows. With S5 and S12 plays an important role in translational accuracy. This chain is Small ribosomal subunit protein uS4, found in Lactobacillus acidophilus (strain ATCC 700396 / NCK56 / N2 / NCFM).